The following is a 344-amino-acid chain: tRNA N6-adenosine threonylcarbamoyltransferase (344 aa).

Residues histidine 111 and histidine 115 each contribute to the Fe cation site. Residues 136–140 (LVSGG), aspartate 169, glycine 182, and asparagine 279 each bind substrate. Residue aspartate 307 participates in Fe cation binding.

Belongs to the KAE1 / TsaD family. Fe(2+) serves as cofactor.

It is found in the cytoplasm. It carries out the reaction L-threonylcarbamoyladenylate + adenosine(37) in tRNA = N(6)-L-threonylcarbamoyladenosine(37) in tRNA + AMP + H(+). Its function is as follows. Required for the formation of a threonylcarbamoyl group on adenosine at position 37 (t(6)A37) in tRNAs that read codons beginning with adenine. Is involved in the transfer of the threonylcarbamoyl moiety of threonylcarbamoyl-AMP (TC-AMP) to the N6 group of A37, together with TsaE and TsaB. TsaD likely plays a direct catalytic role in this reaction. The sequence is that of tRNA N6-adenosine threonylcarbamoyltransferase from Mannheimia succiniciproducens (strain KCTC 0769BP / MBEL55E).